Here is a 326-residue protein sequence, read N- to C-terminus: Phospho-N-acetylmuramoyl-pentapeptide-transferase (326 aa).

The next 10 helical transmembrane spans lie at 2 to 22 (ILAT…FPYF), 51 to 71 (VPPM…LLWV), 73 to 93 (LTPE…LGFI), 113 to 133 (ILIQ…YSAE), 143 to 163 (GVII…IVGS), 175 to 195 (GLAA…AYIT), 199 to 219 (MNIT…LWFN), 225 to 245 (IFMG…TSVL), 250 to 270 (MLFA…IIQI), and 305 to 325 (VIVM…ITFL).

Belongs to the glycosyltransferase 4 family. MraY subfamily. It depends on Mg(2+) as a cofactor.

It is found in the cell membrane. It catalyses the reaction UDP-N-acetyl-alpha-D-muramoyl-L-alanyl-gamma-D-glutamyl-meso-2,6-diaminopimeloyl-D-alanyl-D-alanine + di-trans,octa-cis-undecaprenyl phosphate = di-trans,octa-cis-undecaprenyl diphospho-N-acetyl-alpha-D-muramoyl-L-alanyl-D-glutamyl-meso-2,6-diaminopimeloyl-D-alanyl-D-alanine + UMP. It participates in cell wall biogenesis; peptidoglycan biosynthesis. Its function is as follows. Catalyzes the initial step of the lipid cycle reactions in the biosynthesis of the cell wall peptidoglycan: transfers peptidoglycan precursor phospho-MurNAc-pentapeptide from UDP-MurNAc-pentapeptide onto the lipid carrier undecaprenyl phosphate, yielding undecaprenyl-pyrophosphoryl-MurNAc-pentapeptide, known as lipid I. This is Phospho-N-acetylmuramoyl-pentapeptide-transferase from Wolbachia sp. subsp. Drosophila simulans (strain wRi).